Reading from the N-terminus, the 108-residue chain is UPF0060 membrane protein SH0717 (108 aa).

The next 4 membrane-spanning stretches (helical) occupy residues 5-25, 31-51, 60-80, and 86-106; these read IFIFLLAGLCEIGGGYLIWLW, SSWLGFIGGVILMMYGVIATF, VYAAYGGVFIVMSLIWAYIVD, and KYDLIGACICIIGVCVMILPS.

This sequence belongs to the UPF0060 family.

Its subcellular location is the cell membrane. This chain is UPF0060 membrane protein SH0717, found in Staphylococcus haemolyticus (strain JCSC1435).